The primary structure comprises 453 residues: Regulatory protein opaque-2 (453 aa).

A disordered region spans residues 145-243 (SSVVTSDQRS…SNRESARRSR (99 aa)). Positions 146-175 (SVVTSDQRSQGSNNHTGGSSIRNNPVQNKL) are enriched in polar residues. A compositionally biased stretch (acidic residues) spans 207 to 216 (PSDEDMDGEV). Basic and acidic residues predominate over residues 224 to 240 (PTEERVRKKESNRESAR). The 64-residue stretch at 225 to 288 (TEERVRKKES…NDANVDNRVL (64 aa)) folds into the bZIP domain. The segment at 228–251 (RVRKKESNRESARRSRYRKAAHLK) is basic motif. The segment at 253–274 (LEDQVAQLKAENSCLLRRIAAL) is leucine-zipper.

This sequence belongs to the bZIP family. Interacts with the Dof zinc finger protein PBF. As to expression, seed endosperm.

The protein localises to the nucleus. Its function is as follows. Involved in the regulation of the endosperm-specific production of albumin b-32 and other zein proteins. It is a trans-acting transcriptional activator that binds to the consensus sequence 5'-GATGAYRTGR-3'. The sequence is that of Regulatory protein opaque-2 (O2) from Zea mays (Maize).